The sequence spans 456 residues: tRNA modification GTPase MnmE (456 aa).

Residues Arg-25, Glu-82, and Lys-121 each contribute to the (6S)-5-formyl-5,6,7,8-tetrahydrofolate site. The 163-residue stretch at 217–379 (GMKVVIAGRP…LKAHLKSVMG (163 aa)) folds into the TrmE-type G domain. Asn-227 contacts K(+). GTP is bound by residues 227–232 (NAGKSS), 246–252 (TNIAGTT), and 271–274 (DTAG). Residue Ser-231 coordinates Mg(2+). The K(+) site is built by Thr-246, Ile-248, and Thr-251. Position 252 (Thr-252) interacts with Mg(2+). Residue Lys-456 coordinates (6S)-5-formyl-5,6,7,8-tetrahydrofolate.

This sequence belongs to the TRAFAC class TrmE-Era-EngA-EngB-Septin-like GTPase superfamily. TrmE GTPase family. Homodimer. Heterotetramer of two MnmE and two MnmG subunits. K(+) is required as a cofactor.

It localises to the cytoplasm. Its function is as follows. Exhibits a very high intrinsic GTPase hydrolysis rate. Involved in the addition of a carboxymethylaminomethyl (cmnm) group at the wobble position (U34) of certain tRNAs, forming tRNA-cmnm(5)s(2)U34. The sequence is that of tRNA modification GTPase MnmE from Saccharophagus degradans (strain 2-40 / ATCC 43961 / DSM 17024).